A 415-amino-acid polypeptide reads, in one-letter code: Tyrosine--tRNA ligase (415 aa).

L-tyrosine is bound at residue Tyr-34. Positions 39–48 match the 'HIGH' region motif; sequence PTSDSLTVGH. Tyr-164 and Gln-168 together coordinate L-tyrosine. Residues 225 to 229 carry the 'KMSKS' region motif; sequence KFGKS. Lys-228 is an ATP binding site. The region spanning 348 to 414 is the S4 RNA-binding domain; the sequence is IPLSEALVKT…GKKNNSLIIL (67 aa).

The protein belongs to the class-I aminoacyl-tRNA synthetase family. TyrS type 1 subfamily. Homodimer.

The protein resides in the cytoplasm. The enzyme catalyses tRNA(Tyr) + L-tyrosine + ATP = L-tyrosyl-tRNA(Tyr) + AMP + diphosphate + H(+). In terms of biological role, catalyzes the attachment of tyrosine to tRNA(Tyr) in a two-step reaction: tyrosine is first activated by ATP to form Tyr-AMP and then transferred to the acceptor end of tRNA(Tyr). This chain is Tyrosine--tRNA ligase, found in Phytoplasma australiense.